A 281-amino-acid polypeptide reads, in one-letter code: AT-hook motif nuclear-localized protein 20 (281 aa).

Disordered regions lie at residues 43-85 (MNQS…APIF) and 216-247 (MEEE…DLSG). Residues 67–79 (RRPRGRPPGSKNK) constitute a DNA-binding region (a.T hook). The 139-residue stretch at 91–229 (PNALRSHVLE…EDGGGSRQIH (139 aa)) folds into the PPC domain.

The protein resides in the nucleus. In terms of biological role, transcription factor that specifically binds AT-rich DNA sequences related to the nuclear matrix attachment regions (MARs). Negatively regulates plant innate immunity (PTI) to pathogens through the down-regulation of the PAMP-triggered NHO1 and FRK1 expression. This Arabidopsis thaliana (Mouse-ear cress) protein is AT-hook motif nuclear-localized protein 20.